Here is a 227-residue protein sequence, read N- to C-terminus: MTNNVIIRQLGIQAYQLVLVAMQRFTERRKANTIDEIWLVQHPPVFTQGNASESEYLLLIPGDIPVVQSDRGGKITYHGPGQQVMYVMLDLRRRNLLVRDLITILEKTVITTLYKFAITTAYSKKDAPGVYVGDDKICSIGLRIRKGCSLHGLALNIAMDLSPFLLINPCGEVGLRMTQLSRLSPVVYNTTDVVKVLLEVFLSLLGGTNTGAIKTWHYNDYLNNSES.

One can recognise a BPL/LPL catalytic domain in the interval 31-209 (ANTIDEIWLV…VFLSLLGGTN (179 aa)). Substrate is bound by residues 71-78 (RGGKITYH), 139-141 (SIG), and 152-154 (GLA). Residue cysteine 170 is the Acyl-thioester intermediate of the active site.

This sequence belongs to the LipB family.

The protein resides in the cytoplasm. It carries out the reaction octanoyl-[ACP] + L-lysyl-[protein] = N(6)-octanoyl-L-lysyl-[protein] + holo-[ACP] + H(+). The protein operates within protein modification; protein lipoylation via endogenous pathway; protein N(6)-(lipoyl)lysine from octanoyl-[acyl-carrier-protein]: step 1/2. Catalyzes the transfer of endogenously produced octanoic acid from octanoyl-acyl-carrier-protein onto the lipoyl domains of lipoate-dependent enzymes. Lipoyl-ACP can also act as a substrate although octanoyl-ACP is likely to be the physiological substrate. The chain is Octanoyltransferase from Baumannia cicadellinicola subsp. Homalodisca coagulata.